A 193-amino-acid polypeptide reads, in one-letter code: Riboflavin kinase (193 aa).

Residues 1–59 (MGISQQAASQHLRELEDEGLITRNAEGKGISVMVTDKGRHELLRVYNILHDSLHSRPDH) form an H-T-H motif-like region. Residues 60–193 (VEITGTLVSG…TIRIPLEQED (134 aa)) are riboflavin kinase. 69–74 (GMNEGA) provides a ligand contact to CDP. Positions 98 and 100 each coordinate Mg(2+). The FMN site is built by Thr-156 and Glu-164. Residue 169-172 (LDIR) coordinates CDP.

This sequence belongs to the archaeal riboflavin kinase family. It depends on Mg(2+) as a cofactor.

It carries out the reaction riboflavin + CTP = CDP + FMN + H(+). It participates in cofactor biosynthesis; FMN biosynthesis; FMN from riboflavin (CTP route): step 1/1. Its function is as follows. Catalyzes the CTP-dependent phosphorylation of riboflavin (vitamin B2) to form flavin mononucleotide (FMN). The chain is Riboflavin kinase (ribK) from Cenarchaeum symbiosum (strain A).